Here is a 337-residue protein sequence, read N- to C-terminus: Palmitoyltransferase ZDHHC15 (337 aa).

At 1-20 (MRRGWKMALSGGLRCCRRVL) the chain is on the cytoplasmic side. The chain crosses the membrane as a helical span at residues 21 to 41 (SWVPVLVIVLVVLWSYYAYVF). The Lumenal portion of the chain corresponds to 42–56 (ELCLVTVLSPAEKVI). The helical transmembrane segment at 57–77 (YLILYHAIFVFFAWTYWKSIF) threads the bilayer. Over 78 to 172 (TLPQQPNQKF…NNCIGFSNYK (95 aa)) the chain is Cytoplasmic. In terms of domain architecture, DHHC spans 129–179 (RFCDRCHLIKPDRCHHCSVCAMCVLKMDHHCPWVNNCIGFSNYKFFLQFLA). Zn(2+) contacts are provided by cysteine 131, cysteine 134, histidine 144, cysteine 145, cysteine 148, cysteine 151, and histidine 158. The S-palmitoyl cysteine intermediate role is filled by cysteine 159. Position 165 (cysteine 165) interacts with Zn(2+). The chain crosses the membrane as a helical span at residues 173 to 193 (FFLQFLAYSVLYCLYIATTVF). Residues 194–210 (SYFIKYWRGELPSVRSK) are Lumenal-facing. The chain crosses the membrane as a helical span at residues 211 to 234 (FHVLFLLFVACMFFVSLVILFGYH). The Cytoplasmic segment spans residues 235 to 337 (CWLVSRNKTT…SSSLAVESET (103 aa)). The segment at 293–337 (HSFPMRSMNESQNPLLANEEPWEDNEDDSRDYPEGSSSLAVESET) is disordered. Residues 312–321 (EPWEDNEDDS) show a composition bias toward acidic residues. Over residues 327 to 337 (GSSSLAVESET) the composition is skewed to polar residues.

Belongs to the DHHC palmitoyltransferase family. In terms of processing, autopalmitoylated (in vitro). In terms of tissue distribution, expressed mainly in brain.

It localises to the golgi apparatus membrane. It is found in the postsynaptic density. It carries out the reaction L-cysteinyl-[protein] + hexadecanoyl-CoA = S-hexadecanoyl-L-cysteinyl-[protein] + CoA. The enzyme catalyses L-cysteinyl-[protein] + tetradecanoyl-CoA = S-tetradecanoyl-L-cysteinyl-[protein] + CoA. The catalysed reaction is L-cysteinyl-[protein] + octadecanoyl-CoA = S-octadecanoyl-L-cysteinyl-[protein] + CoA. Its activity is regulated as follows. Inhibited by 2-bromopalmitate. Its function is as follows. Palmitoyltransferase that catalyzes the addition of palmitate onto various protein substrates. Has no stringent fatty acid selectivity and in addition to palmitate can also transfer onto target proteins myristate from tetradecanoyl-CoA and stearate from octadecanoyl-CoA. Palmitoylates IGF2R and SORT1, promoting their partitioning to an endosomal membrane subdomain where they can interact with the retromer cargo-selective complex. Thereby, regulates retrograde transport from endosomes to the Golgi apparatus of these lysosomal sorting receptors and plays a role in trafficking of lysosomal proteins. In the nervous system, catalyzes the palmitoylation of DLG4/PSD95 and regulates its synaptic clustering and function in synaptogenesis. Could be involved in the differentiation of dopaminergic neurons and the development of the diencephalon. Could also catalyze the palmitoylation of GAP43. Could also palmitoylate DNAJC5 and regulate its localization to the Golgi membrane. Could also palmitoylate FYN as shown in vitro. May palmitoylate CALHM3 subunit of gustatory voltage-gated ion channels and modulate channel gating and kinetics. This is Palmitoyltransferase ZDHHC15 from Mus musculus (Mouse).